We begin with the raw amino-acid sequence, 527 residues long: Triostin synthetase I (527 aa).

Residue 187–188 (GG) participates in ATP binding. Substrate is bound at residue 230–231 (HQ). ATP contacts are provided by residues 300–302 (SAP), Asp406, Arg421, and Lys512. Lys512 serves as a coordination point for substrate.

This sequence belongs to the ATP-dependent AMP-binding enzyme family. Monomer.

Its function is as follows. Involved in triostin biosynthesis. Activates quinoxaline-2-carboxylic acid (QA) via catalysis of the ATP-pyrophosphate exchange reaction dependent on QA, and the formation of the corresponding adenylate. Also activates structural analogs of QA such as quinoline-2-carboxylic acid and thieno[3,2-b]pyridine-5-carboxylic acid, but not quinoline-3-carboxylic acid, quinoline-4-carboxylic acid, pyridine-2-carboxylic acid or 2-pyrazinecarboxylic acid. The polypeptide is Triostin synthetase I (trsA) (Streptomyces triostinicus).